The sequence spans 237 residues: Endonuclease V (237 aa).

2 residues coordinate Mg(2+): aspartate 46 and aspartate 114.

Belongs to the endonuclease V family. Mg(2+) is required as a cofactor.

The protein localises to the cytoplasm. The enzyme catalyses Endonucleolytic cleavage at apurinic or apyrimidinic sites to products with a 5'-phosphate.. Functionally, DNA repair enzyme involved in the repair of deaminated bases. Selectively cleaves double-stranded DNA at the second phosphodiester bond 3' to a deoxyinosine leaving behind the intact lesion on the nicked DNA. The polypeptide is Endonuclease V (Xanthomonas axonopodis pv. citri (strain 306)).